The following is a 235-amino-acid chain: Ubiquinone biosynthesis O-methyltransferase (235 aa).

Positions 39, 59, 80, and 124 each coordinate S-adenosyl-L-methionine.

Belongs to the methyltransferase superfamily. UbiG/COQ3 family.

It catalyses the reaction a 3-demethylubiquinol + S-adenosyl-L-methionine = a ubiquinol + S-adenosyl-L-homocysteine + H(+). It carries out the reaction a 3-(all-trans-polyprenyl)benzene-1,2-diol + S-adenosyl-L-methionine = a 2-methoxy-6-(all-trans-polyprenyl)phenol + S-adenosyl-L-homocysteine + H(+). Its pathway is cofactor biosynthesis; ubiquinone biosynthesis. Its function is as follows. O-methyltransferase that catalyzes the 2 O-methylation steps in the ubiquinone biosynthetic pathway. The polypeptide is Ubiquinone biosynthesis O-methyltransferase (Vibrio parahaemolyticus serotype O3:K6 (strain RIMD 2210633)).